A 284-amino-acid chain; its full sequence is CBY1-interacting BAR domain-containing protein 1-A (284 aa).

A mitochondrion-targeting transit peptide spans Met1 to Lys48. Residues Asp11 to Val221 form a BAR-like region. 2 coiled-coil regions span residues Arg142–Leu184 and Asn260–Asn284. Residues Ser242–Arg261 show a composition bias toward polar residues. The tract at residues Ser242–Asn284 is disordered. Over residues Glu267–Asn284 the composition is skewed to acidic residues.

This sequence belongs to the CIBAR family.

The protein resides in the cytoplasm. It is found in the cytoskeleton. The protein localises to the microtubule organizing center. It localises to the centrosome. Its subcellular location is the centriole. The protein resides in the nucleus. It is found in the mitochondrion inner membrane. The protein localises to the cell projection. It localises to the cilium. Its subcellular location is the flagellum. Functionally, plays a critical role in regulating mitochondrial ultrastructure and function by maintaining the integrity of mitochondrial morphology, particularly the organization of cristae. Plays a crucial role in ciliogenesis. Plays a key role in the correct positioning of the annulus, a septin-based ring structure in the sperm flagellum, serving both as a physical barrier and a membrane diffusion barrier that separates the midpiece (MP) from the principal piece (PP). This chain is CBY1-interacting BAR domain-containing protein 1-A, found in Xenopus laevis (African clawed frog).